The chain runs to 908 residues: Oxysterol-binding protein 2 (908 aa).

The tract at residues 42–112 is disordered; that stretch reads SAFGSGPASK…GLWPGSENGT (71 aa). Residues 81–90 are compositionally biased toward polar residues; sequence EPGSQTTSVP. A PH domain is found at 179-271; it reads LDSYKGWLLK…WITALELAKA (93 aa). Disordered stretches follow at residues 279–299, 413–445, and 822–843; these read TQSD…DNSE, RAFC…SEED, and LMER…EKQR. Phosphoserine is present on serine 284. Low complexity predominate over residues 424-437; sequence SSSKSFSEGSFLTS.

This sequence belongs to the OSBP family. In terms of assembly, interacts with CCDC159. As to expression, expressed in the testis (at protein level). Expressed in postmeiotic germ cells of the testis.

The protein resides in the membrane. The protein localises to the cytoplasmic vesicle. It localises to the secretory vesicle. It is found in the acrosome. Its function is as follows. Binds 7-ketocholesterol. Acts during spermatid development where its function is required prior to the removal of cytoplasm from the sperm head. The chain is Oxysterol-binding protein 2 (Osbp2) from Mus musculus (Mouse).